A 324-amino-acid polypeptide reads, in one-letter code: Acetyl-coenzyme A carboxylase carboxyl transferase subunit alpha (324 aa).

The region spanning 37–291 (ILEDKLENLE…DLMLRKTFEQ (255 aa)) is the CoA carboxyltransferase C-terminal domain.

Belongs to the AccA family. As to quaternary structure, acetyl-CoA carboxylase is a heterohexamer composed of biotin carboxyl carrier protein (AccB), biotin carboxylase (AccC) and two subunits each of ACCase subunit alpha (AccA) and ACCase subunit beta (AccD).

Its subcellular location is the cytoplasm. The catalysed reaction is N(6)-carboxybiotinyl-L-lysyl-[protein] + acetyl-CoA = N(6)-biotinyl-L-lysyl-[protein] + malonyl-CoA. It functions in the pathway lipid metabolism; malonyl-CoA biosynthesis; malonyl-CoA from acetyl-CoA: step 1/1. Functionally, component of the acetyl coenzyme A carboxylase (ACC) complex. First, biotin carboxylase catalyzes the carboxylation of biotin on its carrier protein (BCCP) and then the CO(2) group is transferred by the carboxyltransferase to acetyl-CoA to form malonyl-CoA. This chain is Acetyl-coenzyme A carboxylase carboxyl transferase subunit alpha, found in Bacillus cereus (strain Q1).